The primary structure comprises 275 residues: Aliphatic sulfonates import ATP-binding protein SsuB 1 (275 aa).

Residues 34–260 (ISLTGLEKSF…RHGHPGLCEL (227 aa)) enclose the ABC transporter domain. ATP is bound at residue 66–73 (GKSGCGKS).

Belongs to the ABC transporter superfamily. Aliphatic sulfonates importer (TC 3.A.1.17.2) family. As to quaternary structure, the complex is composed of two ATP-binding proteins (SsuB), two transmembrane proteins (SsuC) and a solute-binding protein (SsuA).

Its subcellular location is the cell inner membrane. The enzyme catalyses ATP + H2O + aliphatic sulfonate-[sulfonate-binding protein]Side 1 = ADP + phosphate + aliphatic sulfonateSide 2 + [sulfonate-binding protein]Side 1.. Its function is as follows. Part of the ABC transporter complex SsuABC involved in aliphatic sulfonates import. Responsible for energy coupling to the transport system. The polypeptide is Aliphatic sulfonates import ATP-binding protein SsuB 1 (Rhizobium johnstonii (strain DSM 114642 / LMG 32736 / 3841) (Rhizobium leguminosarum bv. viciae)).